A 231-amino-acid chain; its full sequence is Large ribosomal subunit protein uL1 (231 aa).

It belongs to the universal ribosomal protein uL1 family. As to quaternary structure, part of the 50S ribosomal subunit.

In terms of biological role, binds directly to 23S rRNA. The L1 stalk is quite mobile in the ribosome, and is involved in E site tRNA release. Functionally, protein L1 is also a translational repressor protein, it controls the translation of the L11 operon by binding to its mRNA. The chain is Large ribosomal subunit protein uL1 from Francisella philomiragia subsp. philomiragia (strain ATCC 25017 / CCUG 19701 / FSC 153 / O#319-036).